The chain runs to 161 residues: Globin CTT-VIIB-8 (161 aa).

The signal sequence occupies residues 1–16 (MKFFAVLALCIVGAIA). One can recognise a Globin domain in the interval 18–161 (PLTADEASLV…NTYAIVVPRL (144 aa)). Residues histidine 76 and histidine 111 each coordinate heme b.

This sequence belongs to the globin family. As to quaternary structure, homodimer.

In Chironomus thummi thummi (Midge), this protein is Globin CTT-VIIB-8 (CTT-7B8).